Here is a 182-residue protein sequence, read N- to C-terminus: Large ribosomal subunit protein uL5 (182 aa).

Belongs to the universal ribosomal protein uL5 family. In terms of assembly, part of the 50S ribosomal subunit; part of the 5S rRNA/L5/L18/L25 subcomplex. Contacts the 5S rRNA and the P site tRNA. Forms a bridge to the 30S subunit in the 70S ribosome.

This is one of the proteins that bind and probably mediate the attachment of the 5S RNA into the large ribosomal subunit, where it forms part of the central protuberance. In the 70S ribosome it contacts protein S13 of the 30S subunit (bridge B1b), connecting the 2 subunits; this bridge is implicated in subunit movement. Contacts the P site tRNA; the 5S rRNA and some of its associated proteins might help stabilize positioning of ribosome-bound tRNAs. This chain is Large ribosomal subunit protein uL5, found in Thermus aquaticus.